The following is a 363-amino-acid chain: Ribosomal RNA small subunit methyltransferase H (363 aa).

S-adenosyl-L-methionine-binding positions include 55–57, Asp75, Asp122, and Gln129; that span reads GGH.

This sequence belongs to the methyltransferase superfamily. RsmH family.

The protein resides in the cytoplasm. The enzyme catalyses cytidine(1402) in 16S rRNA + S-adenosyl-L-methionine = N(4)-methylcytidine(1402) in 16S rRNA + S-adenosyl-L-homocysteine + H(+). In terms of biological role, specifically methylates the N4 position of cytidine in position 1402 (C1402) of 16S rRNA. The protein is Ribosomal RNA small subunit methyltransferase H of Bordetella petrii (strain ATCC BAA-461 / DSM 12804 / CCUG 43448).